A 361-amino-acid chain; its full sequence is Core-capsid bridging protein (361 aa).

The span at 311 to 321 (RRRRVARRSKS) shows a compositional bias: basic residues. Residues 311–331 (RRRRVARRSKSTGRFVAAPRK) form a disordered region.

This sequence belongs to the adenoviridae core-capsid bridging protein family. Monomer. Homodimer. Exists in equilibrium between monomers and dimers in solution. Interacts with the histone-like nucleoprotein; this interactions bridge the virus core to the capsid. Interacts with core protein X; this interactions bridge the virus core to the capsid. Interacts with the endosome lysis protein VI; this interactions bridge the virus core to the capsid. Interacts with the peripentonal hexons. Interacts with host NPM1; this interaction might play a role in virus assembly.

The protein resides in the virion. Its subcellular location is the host nucleus. The protein localises to the host nucleolus. Associates loosely with the viral DNA to form an outer shell around the nucleoprotein-DNA complex and links it with the capsid by binding the endosome lysis protein. Dissociates from the viral genome during entry. Might be involved in nuclear capsid assembly of the viral particles through its association with NPM1/nucleophosmin. This is Core-capsid bridging protein from Bovine adenovirus 2 (BAdV-2).